The chain runs to 109 residues: Cell division protein ZapA (109 aa).

The stretch at 21-99 (PEQQDALNQA…IEQALLEQGR (79 aa)) forms a coiled coil.

This sequence belongs to the ZapA family. Type 1 subfamily. As to quaternary structure, homodimer. Interacts with FtsZ.

The protein localises to the cytoplasm. In terms of biological role, activator of cell division through the inhibition of FtsZ GTPase activity, therefore promoting FtsZ assembly into bundles of protofilaments necessary for the formation of the division Z ring. It is recruited early at mid-cell but it is not essential for cell division. This chain is Cell division protein ZapA, found in Pectobacterium carotovorum subsp. carotovorum (strain PC1).